The sequence spans 375 residues: G-protein coupled estrogen receptor 1 (375 aa).

Position 1 is an N-acetylmethionine (Met1). Residues 1 to 62 (MDATTPAQTV…QQYVIALFLS (62 aa)) are Extracellular-facing. Residues Asn32 and Asn44 are each glycosylated (N-linked (GlcNAc...) asparagine). A helical transmembrane segment spans residues 63–84 (CLYTIFLFPIGFVGNILILVVN). Topologically, residues 85–96 (ISFREKMTIPDL) are cytoplasmic. Residues 97–120 (YFINLAAADLILVADSLIEVFNLD) traverse the membrane as a helical segment. The Extracellular segment spans residues 121–132 (EQYYDIAVLCTF). Cysteines 130 and 207 form a disulfide. Residues 133 to 153 (MSLFLQINMYSSVFFLTWMSF) traverse the membrane as a helical segment. Residues 154-175 (DRYLALAKAMRCGLFRTKHHAR) are Cytoplasmic-facing. A helical membrane pass occupies residues 176-194 (LSCGLIWMASVSATLVPFT). Over 195-220 (AVHLRHTEEACFCFADVREVQWLEVT) the chain is Extracellular. A helical transmembrane segment spans residues 221–236 (LGFIMPFAIIGLCYSL). The Cytoplasmic segment spans residues 237–259 (IVRALIRAHRHRGLRPRRQKALR). The chain crosses the membrane as a helical span at residues 260–280 (MIFAVVLVFFICWLPENVFIS). The Extracellular segment spans residues 281–306 (VHLLQWTQPGDTPCKQSFRHAYPLTG). Residues 307–327 (HIVNLAAFSNSCLNPLIYSFL) form a helical membrane-spanning segment. The Cytoplasmic portion of the chain corresponds to 328–375 (GETFRDKLRLYVEQKTSLPALNRFCHATLKAVIPDSTEQSEVRFSSAV).

It belongs to the G-protein coupled receptor 1 family. Interacts with RAMP3; the interaction confers proper subcellular localization and function in cardioprotection. Interacts with KRT7 and KRT8. Interacts with EGFR; the interaction increases after agonist-induced stimulation in cancer-associated fibroblasts (CAF). Interacts with EGFR and ESR1. Interacts (via C-terminus tail motif) with DLG4 (via N-terminus tandem pair of PDZ domains); the interaction is direct and induces the increase of GPER1 protein levels residing at the plasma membrane surface in a estradiol-independent manner. Homodimer. Heterodimer; heterodimerizes with other G-protein-coupled receptor (GPCRs) like CRHR1, HTR1A and PAQR8. Post-translationally, ubiquitinated; ubiquitination occurs at the plasma membrane and leads to proteasome-mediated degradation. N-glycosylated. Expressed in brain, heart, spleen, preadipocytes, mature adipocytes and primary hippocampal neurons. Expressed in neurons of the hippocampus, hypothalamic paraventricular nucleus (PVH), supraoptic nucleus (SON) and the median eminence. Expressed in the nucleus ambiguous (at protein level). Expressed in brain, pituitary gland, adrenal medulla, renal pelvis, ovary, endothelial cells, visceral fat tissues and islets of Langerhans.

It is found in the nucleus. Its subcellular location is the cytoplasm. The protein localises to the perinuclear region. The protein resides in the cytoskeleton. It localises to the cell membrane. It is found in the endoplasmic reticulum membrane. Its subcellular location is the golgi apparatus membrane. The protein localises to the cell projection. The protein resides in the dendrite. It localises to the cytoplasmic vesicle membrane. It is found in the early endosome. Its subcellular location is the recycling endosome. The protein localises to the golgi apparatus. The protein resides in the trans-Golgi network. It localises to the dendritic spine membrane. It is found in the axon. Its subcellular location is the postsynaptic density. The protein localises to the mitochondrion membrane. Functionally, G-protein coupled estrogen receptor that binds to 17-beta-estradiol (E2) with high affinity, leading to rapid and transient activation of numerous intracellular signaling pathways. Stimulates cAMP production, calcium mobilization and tyrosine kinase Src inducing the release of heparin-bound epidermal growth factor (HB-EGF) and subsequent transactivation of the epidermal growth factor receptor (EGFR), activating downstream signaling pathways such as PI3K/Akt and ERK/MAPK. Mediates pleiotropic functions among others in the cardiovascular, endocrine, reproductive, immune and central nervous systems. Has a role in cardioprotection by reducing cardiac hypertrophy and perivascular fibrosis in a RAMP3-dependent manner. Regulates arterial blood pressure by stimulating vasodilation and reducing vascular smooth muscle and microvascular endothelial cell proliferation. Plays a role in blood glucose homeostasis contributing to the insulin secretion response by pancreatic beta cells. Triggers mitochondrial apoptosis during pachytene spermatocyte differentiation. Stimulates uterine epithelial cell proliferation. Enhances uterine contractility in response to oxytocin. Contributes to thymic atrophy by inducing apoptosis. Attenuates TNF-mediated endothelial expression of leukocyte adhesion molecules. Promotes neuritogenesis in developing hippocampal neurons. Plays a role in acute neuroprotection against NMDA-induced excitotoxic neuronal death. Increases firing activity and intracellular calcium oscillations in luteinizing hormone-releasing hormone (LHRH) neurons. Inhibits early osteoblast proliferation at growth plate during skeletal development. Inhibits mature adipocyte differentiation and lipid accumulation. Involved in the recruitment of beta-arrestin 2 ARRB2 at the plasma membrane in epithelial cells. Also functions as a receptor for aldosterone mediating rapid regulation of vascular contractibility through the PI3K/ERK signaling pathway. Involved in cancer progression regulation. Stimulates cancer-associated fibroblast (CAF) proliferation by a rapid genomic response through the EGFR/ERK transduction pathway. Associated with EGFR, may act as a transcription factor activating growth regulatory genes (c-fos, cyclin D1). Promotes integrin alpha-5/beta-1 and fibronectin (FN) matrix assembly in breast cancer cells. The chain is G-protein coupled estrogen receptor 1 (Gper1) from Mus musculus (Mouse).